The primary structure comprises 783 residues: uncharacterized protein (783 aa).

The interval Met-1–Asp-22 is disordered. The Cytoplasmic portion of the chain corresponds to Met-1–Arg-109. The helical; Signal-anchor for type II membrane protein transmembrane segment at Arg-110–Ser-127 threads the bilayer. Residues Asp-128–Phe-783 are Extracellular-facing. Residues Asn-139 and Asn-213 are each glycosylated (N-linked (GlcNAc...) asparagine). The PA domain maps to His-241–Trp-333. N-linked (GlcNAc...) asparagine glycosylation is present at Asn-529.

It is found in the cell membrane. This is an uncharacterized protein from Saccharomyces cerevisiae (strain ATCC 204508 / S288c) (Baker's yeast).